The chain runs to 467 residues: MAAVDAILAGKYPAKAHARRVAESLQSHRNGCPGIVYLEAQKTRLIEDNDEPVPFRQRRPFFYLSGCPLSDSCLVYDLSEDQLTLFIPPVDPEDVIWSGLPMSTEQAQNQYDVDRVLVTTELNSTLASIASSHGGKAIAFTIADQVSESTQFHGFSEVNQSVLKGVIEQSRVVKDEYEVALLRKANDISAKAHIAAIKASQTAVNEREIEGAFIATCIANGAREQSYHPIVACGENGAILHYGKNDDTLIDPVTNQKKRNVLIDAGGEYRTYCADITRVIPVGGKFTAETRQIYDIVLQMQTECIAMLKEGVQWEDVHAHAHRVAIRGLLRLGILRGAEDEIFEKRVSVAFFPHGLGHYLGMDTHDTGGNPNYTDKDTMFRYLRVRGRLPAGSVITVEPGVYFCRFIIEPYIKSPESNKYIDTNVLDRYWRVGGVRIEDNVVVTKNGYDNLTTAPKAVDEIERLAVS.

Mn(2+) is bound by residues Asp-264, Asp-275, Glu-398, and Glu-438.

This sequence belongs to the peptidase M24B family. Mn(2+) is required as a cofactor.

It carries out the reaction Release of any N-terminal amino acid, including proline, that is linked to proline, even from a dipeptide or tripeptide.. Functionally, catalyzes the removal of a penultimate prolyl residue from the N-termini of peptides. In Neosartorya fischeri (strain ATCC 1020 / DSM 3700 / CBS 544.65 / FGSC A1164 / JCM 1740 / NRRL 181 / WB 181) (Aspergillus fischerianus), this protein is Probable Xaa-Pro aminopeptidase pepP (pepP).